A 529-amino-acid polypeptide reads, in one-letter code: Bifunctional purine biosynthesis protein PurH (529 aa).

Residues 1 to 148 (MQQRRSVRRA…KNHKDVAIVV (148 aa)) form the MGS-like domain.

It belongs to the PurH family.

It catalyses the reaction (6R)-10-formyltetrahydrofolate + 5-amino-1-(5-phospho-beta-D-ribosyl)imidazole-4-carboxamide = 5-formamido-1-(5-phospho-D-ribosyl)imidazole-4-carboxamide + (6S)-5,6,7,8-tetrahydrofolate. It carries out the reaction IMP + H2O = 5-formamido-1-(5-phospho-D-ribosyl)imidazole-4-carboxamide. It functions in the pathway purine metabolism; IMP biosynthesis via de novo pathway; 5-formamido-1-(5-phospho-D-ribosyl)imidazole-4-carboxamide from 5-amino-1-(5-phospho-D-ribosyl)imidazole-4-carboxamide (10-formyl THF route): step 1/1. Its pathway is purine metabolism; IMP biosynthesis via de novo pathway; IMP from 5-formamido-1-(5-phospho-D-ribosyl)imidazole-4-carboxamide: step 1/1. This chain is Bifunctional purine biosynthesis protein PurH, found in Salmonella arizonae (strain ATCC BAA-731 / CDC346-86 / RSK2980).